The following is a 259-amino-acid chain: Ribonuclease HII (259 aa).

An RNase H type-2 domain is found at 70 to 258 (TLIAGIDEVG…VKSLVLGKKE (189 aa)). 3 residues coordinate a divalent metal cation: Asp-76, Glu-77, and Asp-168.

Belongs to the RNase HII family. Requires Mn(2+) as cofactor. Mg(2+) serves as cofactor.

The protein resides in the cytoplasm. It catalyses the reaction Endonucleolytic cleavage to 5'-phosphomonoester.. Its function is as follows. Endonuclease that specifically degrades the RNA of RNA-DNA hybrids. This chain is Ribonuclease HII, found in Streptococcus pneumoniae (strain 70585).